Here is a 229-residue protein sequence, read N- to C-terminus: Heptaprenylglyceryl phosphate synthase (229 aa).

Residue K12 participates in sn-glycerol 1-phosphate binding. Residues D14 and S40 each coordinate Mg(2+). Residues 159–164 (YLEYSG), G189, and 209–210 (GN) each bind sn-glycerol 1-phosphate.

It belongs to the GGGP/HepGP synthase family. Group I subfamily. Homodimer. It depends on Mg(2+) as a cofactor.

It catalyses the reaction sn-glycerol 1-phosphate + all-trans-heptaprenyl diphosphate = 3-heptaprenyl-sn-glycero-1-phosphate + diphosphate. It participates in membrane lipid metabolism; glycerophospholipid metabolism. In terms of biological role, prenyltransferase that catalyzes in vivo the transfer of the heptaprenyl moiety of heptaprenyl pyrophosphate (HepPP; 35 carbon atoms) to the C3 hydroxyl of sn-glycerol-1-phosphate (G1P), producing heptaprenylglyceryl phosphate (HepGP). This reaction is an ether-bond-formation step in the biosynthesis of archaea-type G1P-based membrane lipids found in Bacillales. The chain is Heptaprenylglyceryl phosphate synthase from Bacillus cereus (strain G9842).